The following is a 382-amino-acid chain: V-type proton ATPase subunit C 1 (382 aa).

An N-acetylthreonine modification is found at T2.

It belongs to the V-ATPase C subunit family. In terms of assembly, V-ATPase is a heteromultimeric enzyme made up of two complexes: the ATP-hydrolytic V1 complex and the proton translocation V0 complex. The V1 complex consists of three catalytic AB heterodimers that form a heterohexamer, three peripheral stalks each consisting of EG heterodimers, one central rotor including subunits D and F, and the regulatory subunits C and H. The proton translocation complex V0 consists of the proton transport subunit a, a ring of proteolipid subunits c9c'', rotary subunit d, subunits e and f, and two accessory subunits.

Subunit of the V1 complex of vacuolar(H+)-ATPase (V-ATPase), a multisubunit enzyme composed of a peripheral complex (V1) that hydrolyzes ATP and a membrane integral complex (V0) that translocates protons. V-ATPase is responsible for acidifying and maintaining the pH of intracellular compartments and in some cell types, is targeted to the plasma membrane, where it is responsible for acidifying the extracellular environment. Subunit C is necessary for the assembly of the catalytic sector of the enzyme and is likely to have a specific function in its catalytic activity. This chain is V-type proton ATPase subunit C 1 (atp6v1c1), found in Xenopus laevis (African clawed frog).